The sequence spans 162 residues: Selenoprotein F (162 aa).

The first 28 residues, 1–28 (MAAGQGGWLRPALGLRLLLATAFQAVSA), serve as a signal peptide directing secretion. Residue Sec93 is a non-standard amino acid, selenocysteine.

It belongs to the selenoprotein M/F family. In terms of assembly, forms a tight complex with UGGT1/UGCGL1. Interacts with UGGT2/UGCGL2. Interacts with RDH11.

It localises to the endoplasmic reticulum lumen. In terms of biological role, may be involved in redox reactions associated with the formation of disulfide bonds. May contribute to the quality control of protein folding in the endoplasmic reticulum. May regulate protein folding by enhancing the catalytic activity of UGGT1/UGCGL1 and UGGT2/UGCGL2. The protein is Selenoprotein F of Mus musculus (Mouse).